A 161-amino-acid polypeptide reads, in one-letter code: ATP synthase subunit b (161 aa).

The helical transmembrane segment at 2–22 (VIEWGTALYQLLAFAVLLLIL) threads the bilayer.

It belongs to the ATPase B chain family. F-type ATPases have 2 components, F(1) - the catalytic core - and F(0) - the membrane proton channel. F(1) has five subunits: alpha(3), beta(3), gamma(1), delta(1), epsilon(1). F(0) has three main subunits: a(1), b(2) and c(10-14). The alpha and beta chains form an alternating ring which encloses part of the gamma chain. F(1) is attached to F(0) by a central stalk formed by the gamma and epsilon chains, while a peripheral stalk is formed by the delta and b chains.

The protein localises to the cell membrane. F(1)F(0) ATP synthase produces ATP from ADP in the presence of a proton or sodium gradient. F-type ATPases consist of two structural domains, F(1) containing the extramembraneous catalytic core and F(0) containing the membrane proton channel, linked together by a central stalk and a peripheral stalk. During catalysis, ATP synthesis in the catalytic domain of F(1) is coupled via a rotary mechanism of the central stalk subunits to proton translocation. Functionally, component of the F(0) channel, it forms part of the peripheral stalk, linking F(1) to F(0). This is ATP synthase subunit b from Shouchella clausii (strain KSM-K16) (Alkalihalobacillus clausii).